Consider the following 570-residue polypeptide: Alpha-glucosidase (570 aa).

Aspartate 206 functions as the Nucleophile in the catalytic mechanism. The active-site Proton donor is glutamate 263.

Belongs to the glycosyl hydrolase 13 family.

It carries out the reaction Hydrolysis of terminal, non-reducing (1-&gt;4)-linked alpha-D-glucose residues with release of alpha-D-glucose.. The polypeptide is Alpha-glucosidase (MAL2) (Candida albicans (Yeast)).